A 156-amino-acid polypeptide reads, in one-letter code: ATP synthase subunit b (156 aa).

A helical membrane pass occupies residues 7-29 (LFGQTIAFAIFVWFCMKFVWPPL).

Belongs to the ATPase B chain family. As to quaternary structure, F-type ATPases have 2 components, F(1) - the catalytic core - and F(0) - the membrane proton channel. F(1) has five subunits: alpha(3), beta(3), gamma(1), delta(1), epsilon(1). F(0) has three main subunits: a(1), b(2) and c(10-14). The alpha and beta chains form an alternating ring which encloses part of the gamma chain. F(1) is attached to F(0) by a central stalk formed by the gamma and epsilon chains, while a peripheral stalk is formed by the delta and b chains.

It localises to the cell inner membrane. Functionally, f(1)F(0) ATP synthase produces ATP from ADP in the presence of a proton or sodium gradient. F-type ATPases consist of two structural domains, F(1) containing the extramembraneous catalytic core and F(0) containing the membrane proton channel, linked together by a central stalk and a peripheral stalk. During catalysis, ATP synthesis in the catalytic domain of F(1) is coupled via a rotary mechanism of the central stalk subunits to proton translocation. Its function is as follows. Component of the F(0) channel, it forms part of the peripheral stalk, linking F(1) to F(0). The protein is ATP synthase subunit b of Ectopseudomonas mendocina (strain ymp) (Pseudomonas mendocina).